Consider the following 571-residue polypeptide: Sulfite reductase [NADPH] hemoprotein beta-component (571 aa).

4 residues coordinate [4Fe-4S] cluster: C435, C441, C480, and C484. Siroheme is bound at residue C484.

This sequence belongs to the nitrite and sulfite reductase 4Fe-4S domain family. Alpha(8)-beta(8). The alpha component is a flavoprotein, the beta component is a hemoprotein. It depends on siroheme as a cofactor. The cofactor is [4Fe-4S] cluster.

The enzyme catalyses hydrogen sulfide + 3 NADP(+) + 3 H2O = sulfite + 3 NADPH + 4 H(+). It participates in sulfur metabolism; hydrogen sulfide biosynthesis; hydrogen sulfide from sulfite (NADPH route): step 1/1. Component of the sulfite reductase complex that catalyzes the 6-electron reduction of sulfite to sulfide. This is one of several activities required for the biosynthesis of L-cysteine from sulfate. The chain is Sulfite reductase [NADPH] hemoprotein beta-component from Dickeya chrysanthemi (strain Ech1591) (Dickeya zeae (strain Ech1591)).